The sequence spans 118 residues: Group 1 truncated hemoglobin GlbN (118 aa).

Histidine 70 is a binding site for heme.

Belongs to the truncated hemoglobin family. Group I subfamily. As to quaternary structure, monomer. It depends on heme as a cofactor.

The protein localises to the membrane. The protein is Group 1 truncated hemoglobin GlbN (glbN) of Nostoc sp. (strain MUN 8820).